Consider the following 261-residue polypeptide: Protein STAY-GREEN, chloroplastic (261 aa).

Residues 1–54 (MDTLTSAPLLTTKFKPSFSPQQKPCFPHRRRFENGKKNQSIVPVARLFGPAIFE) constitute a chloroplast transit peptide.

It belongs to the staygreen family.

It is found in the plastid. It localises to the chloroplast. Its function is as follows. Probably involved in the disassembling mechanism of the intact light-harvesting complex of photosystem II (LHCII) in the thylakoid membranes. Required for the chlorophyll breakdown pathway. Acts independent and upstream of pheophorbide a oxygenase (PAO). The protein is Protein STAY-GREEN, chloroplastic (SGR) of Pisum sativum (Garden pea).